The sequence spans 247 residues: MLVVLLTAALLALSSAQGTDEEVNNAETSDVPADSEQQPVDSGSDPPSADADAENVQEGESAPPANEEPPATSGSEEEQQQQEPTQAENQEPPATSGSEEEQQQQEPTQAENQEPPATSGSEEEQQQQQPTQAENQEPPATSGSEEEQQQQESTQAENQEPSDSAGEGQETQPEEGNVESPPSSPENSQEQPQQTNPEEKPPAPKTQEEPQHYRGRPPKKIFPFFIYRGRPVVVFRLEPRNPFARRF.

Positions 1-18 are cleaved as a signal peptide; sequence MLVVLLTAALLALSSAQG. A disordered region spans residues 14 to 219; sequence SSAQGTDEEV…PQHYRGRPPK (206 aa). 7 stretches are compositionally biased toward low complexity: residues 39-50, 58-71, 81-93, 104-116, 126-139, 150-159, and 178-196; these read PVDSGSDPPSAD, EGES…EPPA, QQEP…QEPP, QQQQ…QEPP, QQESTQAENQ, and VESP…QQTN. Tandem repeats lie at residues 67–89, 90–112, 113–135, 136–158, and 159–181. Residues 67–181 form a 5 X 23 AA tandem repeats region; it reads EEPPATSGSE…QPEEGNVESP (115 aa). A compositionally biased stretch (basic and acidic residues) spans 197–212; sequence PEEKPPAPKTQEEPQH.

In terms of tissue distribution, submandibular gland acinar cells.

It localises to the secreted. Its function is as follows. GRP proteins have a marked affinity for hydroxyapatite. They may play a role in the formation of the protective acquired pellicle at the saliva-tooth interface. This chain is Submandibular gland secretory Glx-rich protein CB (Grpcb), found in Rattus norvegicus (Rat).